The sequence spans 159 residues: 2-C-methyl-D-erythritol 2,4-cyclodiphosphate synthase (159 aa).

Residues D8 and H10 each contribute to the a divalent metal cation site. Residues 8–10 (DVH) and 34–35 (HS) each bind 4-CDP-2-C-methyl-D-erythritol 2-phosphate. H42 is an a divalent metal cation binding site. 4-CDP-2-C-methyl-D-erythritol 2-phosphate contacts are provided by residues 56 to 58 (DIG), 61 to 65 (FPDTD), 100 to 106 (AQAPKMA), 132 to 135 (TTTE), F139, and R142.

The protein belongs to the IspF family. In terms of assembly, homotrimer. It depends on a divalent metal cation as a cofactor.

The catalysed reaction is 4-CDP-2-C-methyl-D-erythritol 2-phosphate = 2-C-methyl-D-erythritol 2,4-cyclic diphosphate + CMP. It functions in the pathway isoprenoid biosynthesis; isopentenyl diphosphate biosynthesis via DXP pathway; isopentenyl diphosphate from 1-deoxy-D-xylulose 5-phosphate: step 4/6. In terms of biological role, involved in the biosynthesis of isopentenyl diphosphate (IPP) and dimethylallyl diphosphate (DMAPP), two major building blocks of isoprenoid compounds. Catalyzes the conversion of 4-diphosphocytidyl-2-C-methyl-D-erythritol 2-phosphate (CDP-ME2P) to 2-C-methyl-D-erythritol 2,4-cyclodiphosphate (ME-CPP) with a corresponding release of cytidine 5-monophosphate (CMP). This Cronobacter sakazakii (strain ATCC BAA-894) (Enterobacter sakazakii) protein is 2-C-methyl-D-erythritol 2,4-cyclodiphosphate synthase.